The primary structure comprises 577 residues: Sulfite reductase [NADPH] hemoprotein beta-component (577 aa).

Positions 440, 446, 486, and 490 each coordinate [4Fe-4S] cluster. C490 lines the siroheme pocket.

Belongs to the nitrite and sulfite reductase 4Fe-4S domain family. In terms of assembly, alpha(8)-beta(8). The alpha component is a flavoprotein, the beta component is a hemoprotein. Siroheme is required as a cofactor. [4Fe-4S] cluster serves as cofactor.

The enzyme catalyses hydrogen sulfide + 3 NADP(+) + 3 H2O = sulfite + 3 NADPH + 4 H(+). It functions in the pathway sulfur metabolism; hydrogen sulfide biosynthesis; hydrogen sulfide from sulfite (NADPH route): step 1/1. Component of the sulfite reductase complex that catalyzes the 6-electron reduction of sulfite to sulfide. This is one of several activities required for the biosynthesis of L-cysteine from sulfate. The protein is Sulfite reductase [NADPH] hemoprotein beta-component of Vibrio cholerae serotype O1 (strain ATCC 39541 / Classical Ogawa 395 / O395).